A 693-amino-acid polypeptide reads, in one-letter code: Elongation factor G (693 aa).

A tr-type G domain is found at 8-282; that stretch reads EKTRNIGIMA…AVLDYLPSPL (275 aa). Residues 17-24, 81-85, and 135-138 contribute to the GTP site; these read AHVDAGKT, DTPGH, and NKMD.

The protein belongs to the TRAFAC class translation factor GTPase superfamily. Classic translation factor GTPase family. EF-G/EF-2 subfamily.

It localises to the cytoplasm. Its function is as follows. Catalyzes the GTP-dependent ribosomal translocation step during translation elongation. During this step, the ribosome changes from the pre-translocational (PRE) to the post-translocational (POST) state as the newly formed A-site-bound peptidyl-tRNA and P-site-bound deacylated tRNA move to the P and E sites, respectively. Catalyzes the coordinated movement of the two tRNA molecules, the mRNA and conformational changes in the ribosome. This Enterococcus faecalis (strain ATCC 700802 / V583) protein is Elongation factor G.